The chain runs to 151 residues: Large ribosomal subunit protein bL9 (151 aa).

Belongs to the bacterial ribosomal protein bL9 family.

In terms of biological role, binds to the 23S rRNA. The sequence is that of Large ribosomal subunit protein bL9 from Desulfosudis oleivorans (strain DSM 6200 / JCM 39069 / Hxd3) (Desulfococcus oleovorans).